Here is a 490-residue protein sequence, read N- to C-terminus: Delta(14)-sterol reductase (490 aa).

The next 7 helical transmembrane spans lie at 23–43, 80–100, 136–156, 160–180, 230–250, 255–275, and 324–344; these read FGGP…VHVF, VFGL…ALSL, LAIL…WTFI, FAQI…FVYV, EFME…AFIA, LYGY…FYVF, and QLGA…YSIF. NADP(+) contacts are provided by residues Lys351, Arg355, Ile378, Trp383, and 390–391; that span reads NY. A helical transmembrane segment spans residues 436–456; the sequence is ARGWGIVFTYFYILYFAILLI. NADP(+)-binding positions include Asp462, 466 to 470, and Tyr477; that span reads CSKKY.

It belongs to the ERG4/ERG24 family.

The protein localises to the membrane. The enzyme catalyses 4,4-dimethyl-5alpha-cholesta-8,24-dien-3beta-ol + NADP(+) = 4,4-dimethyl-5alpha-cholesta-8,14,24-trien-3beta-ol + NADPH + H(+). The protein operates within steroid biosynthesis; zymosterol biosynthesis; zymosterol from lanosterol: step 2/6. Reduces the C14=C15 double bond of 4,4-dimethyl-cholesta-8,14,24-trienol to produce 4,4-dimethyl-cholesta-8,24-dienol. The chain is Delta(14)-sterol reductase (erg-3) from Neurospora crassa (strain ATCC 24698 / 74-OR23-1A / CBS 708.71 / DSM 1257 / FGSC 987).